The sequence spans 290 residues: Bifunctional protein FolD (290 aa).

Residues 166-168 (GQS), Ser-191, and Ile-232 each bind NADP(+).

This sequence belongs to the tetrahydrofolate dehydrogenase/cyclohydrolase family. As to quaternary structure, homodimer.

The catalysed reaction is (6R)-5,10-methylene-5,6,7,8-tetrahydrofolate + NADP(+) = (6R)-5,10-methenyltetrahydrofolate + NADPH. The enzyme catalyses (6R)-5,10-methenyltetrahydrofolate + H2O = (6R)-10-formyltetrahydrofolate + H(+). Its pathway is one-carbon metabolism; tetrahydrofolate interconversion. In terms of biological role, catalyzes the oxidation of 5,10-methylenetetrahydrofolate to 5,10-methenyltetrahydrofolate and then the hydrolysis of 5,10-methenyltetrahydrofolate to 10-formyltetrahydrofolate. The protein is Bifunctional protein FolD of Halorhodospira halophila (strain DSM 244 / SL1) (Ectothiorhodospira halophila (strain DSM 244 / SL1)).